The sequence spans 552 residues: Arginine--tRNA ligase (552 aa).

The short motif at 123–133 is the 'HIGH' region element; that stretch reads ANPTGPLTIGR.

It belongs to the class-I aminoacyl-tRNA synthetase family. Monomer.

It is found in the cytoplasm. It carries out the reaction tRNA(Arg) + L-arginine + ATP = L-arginyl-tRNA(Arg) + AMP + diphosphate. In Chlorobium phaeovibrioides (strain DSM 265 / 1930) (Prosthecochloris vibrioformis (strain DSM 265)), this protein is Arginine--tRNA ligase.